Consider the following 309-residue polypeptide: Taste receptor type 2 member 31 (309 aa).

The Extracellular portion of the chain corresponds to 1 to 2 (MT). The helical transmembrane segment at 3–23 (TFIPIIFSSVVVVLFVIGNFA) threads the bilayer. The Cytoplasmic portion of the chain corresponds to 24–55 (NGFIALVNSIERVKRQKISFADQILTALAVSR). Residues 56–76 (VGLLWVLLLNWYSTVFNPAFY) traverse the membrane as a helical segment. The Extracellular portion of the chain corresponds to 77-100 (SVEVRTTAYNVWAVTGHFSNWLAT). The helical transmembrane segment at 101–121 (SLSIFYLLKIANFSNLIFLHL) threads the bilayer. Residues 122-126 (KRRVK) lie on the Cytoplasmic side of the membrane. A helical membrane pass occupies residues 127-147 (SVILVMLLGPLLFLACQLFVI). Over 148–181 (NMKEIVRTKEYEGNLTWKIKLRSAVYLSDATVTT) the chain is Extracellular. Asparagine 161 carries an N-linked (GlcNAc...) asparagine glycan. The helical transmembrane segment at 182–202 (LGNLVPFTLTLLCFLLLICSL) threads the bilayer. Topologically, residues 203-229 (CKHLKKMQLHGKGSQDPSTKVHIKALQ) are cytoplasmic. The helical transmembrane segment at 230–250 (TVIFFLLLCAVYFLSIMISVW) threads the bilayer. At 251–259 (SFGSLENKP) the chain is on the extracellular side. A helical membrane pass occupies residues 260 to 280 (VFMFCKAIRFSYPSIHPFILI). The Cytoplasmic segment spans residues 281–309 (WGNKKLKQTFLSVLRQVRYWVKGEKPSSP).

It belongs to the G-protein coupled receptor T2R family. In terms of tissue distribution, expressed in subsets of taste receptor cells of the tongue and exclusively in gustducin-positive cells.

It is found in the membrane. In terms of biological role, receptor that may play a role in the perception of bitterness and is gustducin-linked. May play a role in sensing the chemical composition of the gastrointestinal content. The activity of this receptor may stimulate alpha gustducin, mediate PLC-beta-2 activation and lead to the gating of TRPM5. Activated by the sulfonyl amide sweeteners saccharin and acesulfame K. This chain is Taste receptor type 2 member 31 (TAS2R31), found in Homo sapiens (Human).